Consider the following 705-residue polypeptide: Complement C1r subcomponent (705 aa).

A signal peptide spans 1-17 (MWLLYLLVPALFCRAGG). The region spanning 18–141 (SIPIPQKLFG…KGFLAYYQAV (124 aa)) is the CUB 1 domain. 3 residues coordinate Ca(2+): glutamate 66, aspartate 74, and aspartate 119. Cysteine 71 and cysteine 89 form a disulfide bridge. Asparagine 125 carries N-linked (GlcNAc...) asparagine glycosylation. The Ca(2+) site is built by aspartate 142, leucine 143, and glutamate 145. One can recognise an EGF-like; calcium-binding domain in the interval 142–190 (DLDECASRSKSGEEDPQPQCQHLCHNYVGGYFCSCRPGYELQEDTHSCQ). 4 cysteine pairs are disulfide-bonded: cysteine 146/cysteine 165, cysteine 161/cysteine 174, cysteine 176/cysteine 189, and cysteine 193/cysteine 220. Asparagine 167, tyrosine 168, and glycine 171 together coordinate Ca(2+). A (3R)-3-hydroxyasparagine modification is found at asparagine 167. Positions 193–305 (CSSELYTEAS…RGWKLRYTTE (113 aa)) constitute a CUB 2 domain. Serine 206 carries the phosphoserine; by CK2 modification. N-linked (GlcNAc...) asparagine glycosylation is present at asparagine 221. Ca(2+) is bound by residues aspartate 243, aspartate 253, aspartate 290, and aspartate 294. Cysteine 250 and cysteine 268 are joined by a disulfide. Sushi domains are found at residues 307 to 373 (IKCP…RCKI) and 374 to 449 (KDCG…RCLP). Cystine bridges form between cysteine 309/cysteine 358, cysteine 338/cysteine 371, cysteine 376/cysteine 429, cysteine 406/cysteine 447, and cysteine 451/cysteine 577. Residues 464 to 702 (IIGGQKAKMG…YVDWIKKEME (239 aa)) enclose the Peptidase S1 domain. Histidine 502 acts as the Charge relay system in catalysis. Residue asparagine 514 is glycosylated (N-linked (GlcNAc...) asparagine). Residue aspartate 557 is the Charge relay system of the active site. A glycan (N-linked (GlcNAc...) asparagine) is linked at asparagine 581. Intrachain disulfides connect cysteine 620/cysteine 639 and cysteine 650/cysteine 680. Serine 654 functions as the Charge relay system in the catalytic mechanism.

It belongs to the peptidase S1 family. As to quaternary structure, core component of the complement C1 complex, a calcium-dependent complex composed of 1 molecule of the C1Q subcomplex, 2 molecules of C1R and 2 molecules of C1S. The C1Q subcomplex is composed 18 subunits: 3 chains of C1QA, C1QB, and C1QC trimerize to form 6 collagen-like triple helices connected to six globular ligand-recognition modules. Within the C1 complex, C1R is a dimer of identical chains, each of which is activated by cleavage into two chains, heavy and light, connected by disulfide bonds. Cleaved and activated by autocatalytic processing to generate Complement C1r subcomponent heavy and light chains that are connected by disulfide bonds. Post-translationally, the iron and 2-oxoglutarate dependent 3-hydroxylation of aspartate and asparagine is (R) stereospecific within EGF domains.

Its subcellular location is the secreted. The protein resides in the cell surface. It catalyses the reaction Selective cleavage of Lys(or Arg)-|-Ile bond in complement subcomponent C1s to form the active form of C1s (EC 3.4.21.42).. Activated by the C1Q subcomplex of the C1 complex following C1Q binding to immunoglobulins (IgG or IgM) complexed with antigens to form antigen-antibody complexes on the surface of pathogens. Immunoglobulin-binding promotes autoactivation of C1R, which results in the cleavage of the Arg-Ile bond in the catalytic domain. Functionally, serine protease component of the complement C1 complex, a multiprotein complex that initiates the classical pathway of the complement system, a cascade of proteins that leads to phagocytosis and breakdown of pathogens and signaling that strengthens the adaptive immune system. C1R catalyzes the first enzymatic step in the classical complement pathway: it is activated by the C1Q subcomplex of the C1 complex, which associates with IgG or IgM immunoglobulins complexed with antigens to form antigen-antibody complexes on the surface of pathogens. Immunoglobulin-binding promotes the autocatalytic cleavage and activation of C1R. Activated C1R then cleaves and activates C1S, the second protease of the classical complement pathway. It is unclear if C1R activates C1S within single, strained C1 complexes or between neighboring C1 complexes on surfaces. This Homo sapiens (Human) protein is Complement C1r subcomponent.